We begin with the raw amino-acid sequence, 426 residues long: 3-phosphoshikimate 1-carboxyvinyltransferase (426 aa).

Positions 22, 23, and 27 each coordinate 3-phosphoshikimate. K22 serves as a coordination point for phosphoenolpyruvate. G96 and R124 together coordinate phosphoenolpyruvate. The 3-phosphoshikimate site is built by S170, S171, Q172, S198, D314, N337, and K341. A phosphoenolpyruvate-binding site is contributed by Q172. D314 serves as the catalytic Proton acceptor. Positions 345, 387, and 412 each coordinate phosphoenolpyruvate.

This sequence belongs to the EPSP synthase family. In terms of assembly, monomer.

The protein resides in the cytoplasm. The catalysed reaction is 3-phosphoshikimate + phosphoenolpyruvate = 5-O-(1-carboxyvinyl)-3-phosphoshikimate + phosphate. It functions in the pathway metabolic intermediate biosynthesis; chorismate biosynthesis; chorismate from D-erythrose 4-phosphate and phosphoenolpyruvate: step 6/7. In terms of biological role, catalyzes the transfer of the enolpyruvyl moiety of phosphoenolpyruvate (PEP) to the 5-hydroxyl of shikimate-3-phosphate (S3P) to produce enolpyruvyl shikimate-3-phosphate and inorganic phosphate. The protein is 3-phosphoshikimate 1-carboxyvinyltransferase of Shewanella baltica (strain OS185).